A 40-amino-acid polypeptide reads, in one-letter code: Photosystem II reaction center protein J (40 aa).

A helical membrane pass occupies residues 8-28 (IPLWVVATIAGLGVITVVGIF).

The protein belongs to the PsbJ family. In terms of assembly, PSII is composed of 1 copy each of membrane proteins PsbA, PsbB, PsbC, PsbD, PsbE, PsbF, PsbH, PsbI, PsbJ, PsbK, PsbL, PsbM, PsbT, PsbX, PsbY, PsbZ, Psb30/Ycf12, peripheral proteins PsbO, CyanoQ (PsbQ), PsbU, PsbV and a large number of cofactors. It forms dimeric complexes.

It is found in the cellular thylakoid membrane. In terms of biological role, one of the components of the core complex of photosystem II (PSII). PSII is a light-driven water:plastoquinone oxidoreductase that uses light energy to abstract electrons from H(2)O, generating O(2) and a proton gradient subsequently used for ATP formation. It consists of a core antenna complex that captures photons, and an electron transfer chain that converts photonic excitation into a charge separation. This chain is Photosystem II reaction center protein J, found in Trichormus variabilis (strain ATCC 29413 / PCC 7937) (Anabaena variabilis).